Here is a 344-residue protein sequence, read N- to C-terminus: Heat-inducible transcription repressor HrcA (344 aa).

Belongs to the HrcA family.

Negative regulator of class I heat shock genes (grpE-dnaK-dnaJ and groELS operons). Prevents heat-shock induction of these operons. This Streptococcus agalactiae serotype Ia (strain ATCC 27591 / A909 / CDC SS700) protein is Heat-inducible transcription repressor HrcA.